Consider the following 461-residue polypeptide: Argininosuccinate lyase (461 aa).

Belongs to the lyase 1 family. Argininosuccinate lyase subfamily.

It is found in the cytoplasm. It catalyses the reaction 2-(N(omega)-L-arginino)succinate = fumarate + L-arginine. It functions in the pathway amino-acid biosynthesis; L-arginine biosynthesis; L-arginine from L-ornithine and carbamoyl phosphate: step 3/3. The sequence is that of Argininosuccinate lyase from Streptococcus thermophilus (strain CNRZ 1066).